A 459-amino-acid chain; its full sequence is Spermidine/putrescine import ATP-binding protein PotA (459 aa).

Residues 15–334 enclose the ABC transporter domain; the sequence is IELIDIVKQF…PRNIWVAKFI (320 aa). An ATP-binding site is contributed by 47-54; it reads GPSGSGKT. The insert stretch occupies residues 115–203; sequence RVPKENVKKE…EEFKNKYFKR (89 aa).

It belongs to the ABC transporter superfamily. Spermidine/putrescine importer (TC 3.A.1.11.1) family. As to quaternary structure, the complex is composed of two ATP-binding proteins (PotA), two transmembrane proteins (PotB and PotC) and a solute-binding protein (PotD).

The protein localises to the cell membrane. It carries out the reaction ATP + H2O + polyamine-[polyamine-binding protein]Side 1 = ADP + phosphate + polyamineSide 2 + [polyamine-binding protein]Side 1.. In terms of biological role, part of the ABC transporter complex PotABCD involved in spermidine/putrescine import. Responsible for energy coupling to the transport system. The chain is Spermidine/putrescine import ATP-binding protein PotA from Mycoplasmopsis synoviae (strain 53) (Mycoplasma synoviae).